Here is a 245-residue protein sequence, read N- to C-terminus: Putative binding protein HI_1525 (245 aa).

Residues 1-19 (MKKLVAVTSMILTTFSVQA) form the signal peptide. Positions 56 and 163 each coordinate molybdate.

The protein belongs to the bacterial solute-binding protein ModA family.

The protein localises to the periplasm. Probably involved in the binding-dependent system. This chain is Putative binding protein HI_1525, found in Haemophilus influenzae (strain ATCC 51907 / DSM 11121 / KW20 / Rd).